The sequence spans 97 residues: Defensin-like protein 245 (97 aa).

The N-terminal stretch at 1-24 (MKFAAILLVTCVLFSLLPSHLSQG) is a signal peptide. 4 disulfide bridges follow: cysteine 39-cysteine 96, cysteine 50-cysteine 79, cysteine 58-cysteine 89, and cysteine 77-cysteine 91.

This sequence belongs to the DEFL family. In terms of tissue distribution, flower buds and roots.

Its subcellular location is the secreted. In Arabidopsis thaliana (Mouse-ear cress), this protein is Defensin-like protein 245 (SCRL4).